The chain runs to 914 residues: Probable dipeptidyl-aminopeptidase B (914 aa).

Positions 1–10 (MGKSEADEDA) are enriched in acidic residues. The interval 1 to 81 (MGKSEADEDA…DQPFLPSRKG (81 aa)) is disordered. Over 1 to 89 (MGKSEADEDA…KGSGARARRV (89 aa)) the chain is Cytoplasmic. The segment covering 20 to 34 (SSSAASQTSSDSGLS) has biased composition (low complexity). A helical; Signal-anchor for type II membrane protein transmembrane segment spans residues 90–110 (FWGLLLLCLAGWVLAFVLFLI). At 111–914 (QGRSGYSATS…FKRALPVFVH (804 aa)) the chain is on the vacuolar side. Residues Asn347 and Asn638 are each glycosylated (N-linked (GlcNAc...) asparagine). Ser752 (charge relay system) is an active-site residue. N-linked (GlcNAc...) asparagine glycosylation occurs at Asn806. Active-site charge relay system residues include Asp829 and His862.

It belongs to the peptidase S9B family.

It localises to the vacuole membrane. It carries out the reaction Release of an N-terminal dipeptide, Xaa-Yaa-|-Zaa-, from a polypeptide, preferentially when Yaa is Pro, provided Zaa is neither Pro nor hydroxyproline.. Its function is as follows. Type IV dipeptidyl-peptidase which removes N-terminal dipeptides sequentially from polypeptides having unsubstituted N-termini provided that the penultimate residue is proline. The protein is Probable dipeptidyl-aminopeptidase B (dapB) of Aspergillus terreus (strain NIH 2624 / FGSC A1156).